The sequence spans 270 residues: Phosphatidylglycerol--prolipoprotein diacylglyceryl transferase (270 aa).

4 helical membrane passes run 19–39 (FPVY…LWLA), 53–73 (FVDL…AYYV), 92–112 (QGGL…IIYA), and 117–137 (ISFW…QAIG). Arginine 138 contributes to the a 1,2-diacyl-sn-glycero-3-phospho-(1'-sn-glycerol) binding site. Helical transmembrane passes span 178–198 (HPTF…LLLL), 206–226 (GELF…VEEL), and 236–256 (LRIA…FIIV).

It belongs to the Lgt family.

The protein localises to the cell membrane. The enzyme catalyses L-cysteinyl-[prolipoprotein] + a 1,2-diacyl-sn-glycero-3-phospho-(1'-sn-glycerol) = an S-1,2-diacyl-sn-glyceryl-L-cysteinyl-[prolipoprotein] + sn-glycerol 1-phosphate + H(+). Its pathway is protein modification; lipoprotein biosynthesis (diacylglyceryl transfer). Functionally, catalyzes the transfer of the diacylglyceryl group from phosphatidylglycerol to the sulfhydryl group of the N-terminal cysteine of a prolipoprotein, the first step in the formation of mature lipoproteins. The chain is Phosphatidylglycerol--prolipoprotein diacylglyceryl transferase from Bacillus cytotoxicus (strain DSM 22905 / CIP 110041 / 391-98 / NVH 391-98).